Reading from the N-terminus, the 89-residue chain is Small ribosomal subunit protein uS14 (89 aa).

Belongs to the universal ribosomal protein uS14 family. As to quaternary structure, part of the 30S ribosomal subunit. Contacts proteins S3 and S10.

Its function is as follows. Binds 16S rRNA, required for the assembly of 30S particles and may also be responsible for determining the conformation of the 16S rRNA at the A site. This is Small ribosomal subunit protein uS14 from Flavobacterium psychrophilum (strain ATCC 49511 / DSM 21280 / CIP 103535 / JIP02/86).